The chain runs to 151 residues: HTH-type transcriptional regulator FL11 (151 aa).

Residues Leu-5 to Asn-66 form the HTH asnC-type domain. Positions Leu-24 to Lys-43 form a DNA-binding region, H-T-H motif. Glu-98–Asp-104 contributes to the L-arginine binding site. L-lysine-binding positions include Asn-118, Asp-122, and Thr-133–Thr-135. Residues Asp-122 and Thr-133–Thr-135 each bind L-arginine.

In terms of assembly, homodimer. Binds DNA as a dimer and an octamer.

Its activity is regulated as follows. In the famine mode, FL11 forms dimers and acts as a repressor, leading to growth arrest. In the feast mode, in the presence of high concentrations of lysine or arginine, four dimers assemble into an octamer and cover the fl11 and lysine biosynthesis promoters. This leads to the inhibition of fl11 expression and lysine biosynthesis, decrease of the FL11 concentration in the cell, derepression of the target genes and activation of the metabolism. Its function is as follows. DNA-binding protein involved in the repression of transcription of a large number of genes, thereby arresting growth, in response to environmental changes. This chain is HTH-type transcriptional regulator FL11, found in Pyrococcus furiosus (strain ATCC 43587 / DSM 3638 / JCM 8422 / Vc1).